The chain runs to 568 residues: Serine/threonine-protein kinase WNK2 (568 aa).

The region spanning 24–281 (GRYDEILGKG…ALELLQDPFL (258 aa)) is the Protein kinase domain. Residues 104–107 (TELF) and lysine 154 contribute to the ATP site. The active-site Proton acceptor is the aspartate 171. Residues 453 to 473 (SSGEKSHHNHHEFDSSEDKSC) are disordered. Over residues 463–472 (HEFDSSEDKS) the composition is skewed to basic and acidic residues.

The protein belongs to the protein kinase superfamily. Ser/Thr protein kinase family. WNK subfamily. Autophosphorylated.

It catalyses the reaction L-seryl-[protein] + ATP = O-phospho-L-seryl-[protein] + ADP + H(+). It carries out the reaction L-threonyl-[protein] + ATP = O-phospho-L-threonyl-[protein] + ADP + H(+). In terms of biological role, regulates flowering time by modulating the photoperiod pathway. Possesses kinase activity in vitro. The polypeptide is Serine/threonine-protein kinase WNK2 (WNK2) (Arabidopsis thaliana (Mouse-ear cress)).